A 761-amino-acid chain; its full sequence is Copper-exporting P-type ATPase (761 aa).

Residue T2 is modified to N-acetylthreonine. The 65-residue stretch at 14–78 (QRIQLRISGM…AVRRAGYQAD (65 aa)) folds into the HMA domain. C25 and C28 together coordinate Cu(+). The next 6 membrane-spanning stretches (helical) occupy residues 102–122 (LAIA…FGVV), 129–149 (GWQW…AWPF), 164–184 (METL…YTVF), 199–219 (LLGS…FVLV), 361–381 (VFVP…LIAG), and 387–407 (AVSA…GLAT). Residue D443 is the 4-aspartylphosphate intermediate of the active site. 2 helical membrane passes run 695–714 (MVWA…AGLL) and 718–735 (VAGA…SNSL).

Belongs to the cation transport ATPase (P-type) (TC 3.A.3) family. Type IB subfamily.

The protein resides in the cell membrane. It catalyses the reaction Cu(+)(in) + ATP + H2O = Cu(+)(out) + ADP + phosphate + H(+). Its activity is regulated as follows. ATPase activity is stimulated by Cu(+) ions. In terms of biological role, involved in copper export. Could be involved in the copper detoxification of mycobacterial cells. The protein is Copper-exporting P-type ATPase (ctpA) of Mycobacterium tuberculosis (strain ATCC 25618 / H37Rv).